Consider the following 888-residue polypeptide: Serine/arginine repetitive matrix protein 1 (888 aa).

One can recognise a PWI domain in the interval 27-126; the sequence is QLKFAECLEK…AGIPTAFLEL (100 aa). Basic and acidic residues predominate over residues 139–169; the sequence is EKLASMKKQDEDKEKRDKEDKDNREKRDRSR. The tract at residues 139 to 888 is disordered; it reads EKLASMKKQD…MRKAQVSPPS (750 aa). Over residues 170–206 the composition is skewed to basic residues; the sequence is SPRRRKSRSPSPRRRSSPIRRERKRSHSRSPHHRTKS. 2 stretches are compositionally biased toward basic and acidic residues: residues 213-232 and 254-276; these read PEKK…KETV and ETKE…EKTR. Composition is skewed to basic residues over residues 277–325 and 332–347; these read QRSP…RTPP and PRHR…RRRS. 2 stretches are compositionally biased toward low complexity: residues 348–364 and 473–496; these read SASL…SRSR and SVQQ…SSSS. Composition is skewed to basic residues over residues 528 to 554 and 561 to 585; these read PRKR…RRRS and PRRR…RSPS. Residues 586-598 show a composition bias toward low complexity; that stretch reads PRRYSPPIQRRYS. 2 stretches are compositionally biased toward basic residues: residues 614 to 629 and 642 to 656; these read PKRR…RRVS and AKRR…HRKG. Residues 662–677 show a composition bias toward basic and acidic residues; sequence SNRETRSPPQNKRDSP. 3 stretches are compositionally biased toward low complexity: residues 697–712, 728–749, and 763–775; these read ASAS…PSTR, ASTP…SGSP, and ARSR…WSPA. The span at 780 to 790 shows a compositional bias: polar residues; it reads SPTQSPSPARN. Positions 798-823 are enriched in basic residues; the sequence is KKKKKKKDKKHKKDKKHKKHKKHKKE. Positions 826–843 are enriched in low complexity; the sequence is AVAAAPAAVAAADTTSAQ. Residues 866–876 are compositionally biased toward basic and acidic residues; that stretch reads DLEKHLREKAL.

It belongs to the splicing factor SR family.

It localises to the nucleus. In terms of biological role, involved in pre-mRNA splicing and processing events. The protein is Serine/arginine repetitive matrix protein 1 (SRRM1) of Gallus gallus (Chicken).